Reading from the N-terminus, the 482-residue chain is ATP synthase subunit beta (482 aa).

162-169 contacts ATP; the sequence is GGAGVGKT.

The protein belongs to the ATPase alpha/beta chains family. F-type ATPases have 2 components, CF(1) - the catalytic core - and CF(0) - the membrane proton channel. CF(1) has five subunits: alpha(3), beta(3), gamma(1), delta(1), epsilon(1). CF(0) has four main subunits: a(1), b(1), b'(1) and c(9-12).

The protein resides in the cellular thylakoid membrane. It carries out the reaction ATP + H2O + 4 H(+)(in) = ADP + phosphate + 5 H(+)(out). Functionally, produces ATP from ADP in the presence of a proton gradient across the membrane. The catalytic sites are hosted primarily by the beta subunits. This Synechococcus sp. (strain PCC 6716) protein is ATP synthase subunit beta.